Reading from the N-terminus, the 92-residue chain is Small ribosomal subunit protein uS19 (92 aa).

Belongs to the universal ribosomal protein uS19 family.

Its function is as follows. Protein S19 forms a complex with S13 that binds strongly to the 16S ribosomal RNA. The polypeptide is Small ribosomal subunit protein uS19 (Granulibacter bethesdensis (strain ATCC BAA-1260 / CGDNIH1)).